Reading from the N-terminus, the 620-residue chain is 1-deoxy-D-xylulose-5-phosphate synthase (620 aa).

Residues histidine 80 and 121 to 123 (GHS) each bind thiamine diphosphate. Residue aspartate 152 coordinates Mg(2+). Thiamine diphosphate contacts are provided by residues 153–154 (GA), asparagine 181, tyrosine 288, and glutamate 370. Mg(2+) is bound at residue asparagine 181.

The protein belongs to the transketolase family. DXPS subfamily. As to quaternary structure, homodimer. Mg(2+) serves as cofactor. Requires thiamine diphosphate as cofactor.

It catalyses the reaction D-glyceraldehyde 3-phosphate + pyruvate + H(+) = 1-deoxy-D-xylulose 5-phosphate + CO2. It functions in the pathway metabolic intermediate biosynthesis; 1-deoxy-D-xylulose 5-phosphate biosynthesis; 1-deoxy-D-xylulose 5-phosphate from D-glyceraldehyde 3-phosphate and pyruvate: step 1/1. Catalyzes the acyloin condensation reaction between C atoms 2 and 3 of pyruvate and glyceraldehyde 3-phosphate to yield 1-deoxy-D-xylulose-5-phosphate (DXP). In Salmonella typhi, this protein is 1-deoxy-D-xylulose-5-phosphate synthase.